Reading from the N-terminus, the 208-residue chain is Uridine kinase (208 aa).

An ATP-binding site is contributed by 11 to 18; the sequence is GGSGSGKT.

It belongs to the uridine kinase family.

The protein resides in the cytoplasm. It catalyses the reaction uridine + ATP = UMP + ADP + H(+). The enzyme catalyses cytidine + ATP = CMP + ADP + H(+). Its pathway is pyrimidine metabolism; CTP biosynthesis via salvage pathway; CTP from cytidine: step 1/3. The protein operates within pyrimidine metabolism; UMP biosynthesis via salvage pathway; UMP from uridine: step 1/1. This is Uridine kinase from Staphylococcus carnosus (strain TM300).